Consider the following 723-residue polypeptide: Threonine--tRNA ligase 1, cytoplasmic (723 aa).

Positions 1–46 (MFEEKASSPSGKMGGEEKPIGAGEEKQKEGGKKKNKEGSGDGGRAE) are disordered. Over residues 14–39 (GGEEKPIGAGEEKQKEGGKKKNKEGS) the composition is skewed to basic and acidic residues. Serine 39 bears the Phosphoserine mark. In terms of domain architecture, TGS spans 79-143 (DSKPIKVTLP…EEDCTLELLK (65 aa)). Lysine 243 bears the N6-acetyllysine mark. Threonine 246 is modified (phosphothreonine). Tyrosine 298 carries the post-translational modification Phosphotyrosine. Residue threonine 453 is modified to Phosphothreonine. The residue at position 702 (serine 702) is a Phosphoserine.

The protein belongs to the class-II aminoacyl-tRNA synthetase family. As to quaternary structure, homodimer. Post-translationally, ISGylated.

The protein resides in the cytoplasm. It catalyses the reaction tRNA(Thr) + L-threonine + ATP = L-threonyl-tRNA(Thr) + AMP + diphosphate + H(+). With respect to regulation, inhibited by borrelidin (BN, IC 50 is 7 nM), which binds to 4 distinct subsites in the protein, preventing binding of all 3 substrates. Its function is as follows. Catalyzes the attachment of threonine to tRNA(Thr) in a two-step reaction: threonine is first activated by ATP to form Thr-AMP and then transferred to the acceptor end of tRNA(Thr). Also edits incorrectly charged tRNA(Thr) via its editing domain, at the post-transfer stage. The polypeptide is Threonine--tRNA ligase 1, cytoplasmic (Homo sapiens (Human)).